The chain runs to 738 residues: Flowering time control protein FCA (738 aa).

The segment at 1 to 118 is disordered; the sequence is MHRGGDRSTD…RGDHSDHDNR (118 aa). 2 stretches are compositionally biased toward gly residues: residues 52–70 and 81–98; these read RGGG…GGGR and SGGG…GEPG. A compositionally biased stretch (basic and acidic residues) spans 109–118; that stretch reads RGDHSDHDNR. 2 consecutive RRM domains span residues 122 to 203 and 213 to 293; these read VKLF…YADG and HKLF…FADP. 2 disordered regions span residues 292–451 and 566–595; these read DPKR…PAQQ and QQSN…IIPS. Residues 301–311 show a composition bias toward gly residues; sequence SRGGPAFGGPG. Over residues 342–358 the composition is skewed to polar residues; sequence HPSSPRSAPHQFNNFGS. The segment covering 368 to 377 has biased composition (low complexity); sequence TVTSTTDTAT. A compositionally biased stretch (polar residues) spans 383–401; the sequence is FSGNGSLSSQTAVPSSSHM. Over residues 435–451 the composition is skewed to low complexity; the sequence is QLQNNQQGQPLQGPAQQ. Residues 575–595 are compositionally biased toward polar residues; sequence PTQGQPVQSSNPGAPNAIIPS. Residues 609–642 form the WW domain; that stretch reads VPLTCNWTEHTSPEGFKYYYNSITRESKWDKPEE. The disordered stretch occupies residues 670–738; the sequence is MQQLQSPPQA…QSAQERAWKS (69 aa). Low complexity predominate over residues 683-706; it reads PAMQPVQQIPQAQQGQQQMQMKQQ. Positions 723 to 732 are enriched in polar residues; that stretch reads RIQQGIQSAQ.

Interacts with FY. Binds to SF1, FIK, RPRD1B, OsI_31983 and MADS8.

It is found in the nucleus. In terms of biological role, plays a major role in the promotion of the transition of the vegetative meristem to reproductive development. Required for RNA-mediated chromatin silencing of a range of loci in the genome. Cotranscriptionally recognizes aberrant RNA and marks it for silencing. Controls alternative cleavage and polyadenylation on pre-mRNAs and antisense RNAs. Regulates flowering time, seed size and cell volume, probably via the modulation of cell size. The sequence is that of Flowering time control protein FCA from Oryza sativa subsp. indica (Rice).